The following is a 491-amino-acid chain: Cytochrome P450 2F2 (491 aa).

Position 436 (C436) interacts with heme.

This sequence belongs to the cytochrome P450 family. The cofactor is heme. Club cells in lung and liver.

It localises to the endoplasmic reticulum membrane. The protein localises to the microsome membrane. In terms of biological role, involved in the regio- and stereoselective transformation of naphthalene to trans-1R-hydroxy-2R-glutathionyl-1,2-dihydronaphthalene in the presence of glutathione and glutathione S-transferases. It specifically catalyzes the production of a very reactive and potentially toxic intermediate, the 2R,2S arene oxide, that is associated with necrosis of the unciliated bronchiolar epithelial cells or club cells in lung. This is Cytochrome P450 2F2 (Cyp2f2) from Mus musculus (Mouse).